A 428-amino-acid chain; its full sequence is Adenylosuccinate synthetase (428 aa).

Residues 11 to 17 and 39 to 41 each bind GTP; these read GDEGKGK and GHT. The Proton acceptor role is filled by Asp-12. Positions 12 and 39 each coordinate Mg(2+). Residues 12 to 15, 37 to 40, Thr-130, Arg-144, Asn-226, Thr-241, and Arg-305 contribute to the IMP site; these read DEGK and NAGH. The active-site Proton donor is His-40. 301-307 contacts substrate; it reads VTTGRKR. GTP contacts are provided by residues Arg-307, 333–335, and 415–417; these read KLD and GTG.

This sequence belongs to the adenylosuccinate synthetase family. Homodimer. Mg(2+) is required as a cofactor.

The protein localises to the cytoplasm. The enzyme catalyses IMP + L-aspartate + GTP = N(6)-(1,2-dicarboxyethyl)-AMP + GDP + phosphate + 2 H(+). The protein operates within purine metabolism; AMP biosynthesis via de novo pathway; AMP from IMP: step 1/2. Functionally, plays an important role in the de novo pathway and in the salvage pathway of purine nucleotide biosynthesis. Catalyzes the first committed step in the biosynthesis of AMP from IMP. The polypeptide is Adenylosuccinate synthetase (Komagataella phaffii (strain GS115 / ATCC 20864) (Yeast)).